The following is an 802-amino-acid chain: Copal-8-ol diphosphate hydratase, chloroplastic (802 aa).

A chloroplast-targeting transit peptide spans 1-24 (MQVIITSSHRFFCHHLHQLKSPTS). Position 249 (Lys-249) interacts with substrate. 2 residues coordinate Mg(2+): Asp-382 and Asp-384. The DXDD motif signature appears at 382 to 385 (DVDD). Lys-468 contacts substrate.

It belongs to the terpene synthase family. It depends on Mg(2+) as a cofactor. As to expression, expressed specifically in the secretory cells of the glandular trichomes.

It localises to the plastid. It is found in the chloroplast. It catalyses the reaction (2E,6E,10E)-geranylgeranyl diphosphate + H2O = 8-hydroxycopalyl diphosphate. Its pathway is secondary metabolite biosynthesis; terpenoid biosynthesis. Class-II terpene synthase that synthesizes 8-hydroxy-copalyl diphosphate. Involved in the biosynthesis of cis-abienol, a labdane diterpene that can be used as synthesis precursor of ambergris substitution fragance products. This chain is Copal-8-ol diphosphate hydratase, chloroplastic, found in Nicotiana tabacum (Common tobacco).